Consider the following 346-residue polypeptide: Histidinol-phosphate aminotransferase (346 aa).

An N6-(pyridoxal phosphate)lysine modification is found at K209.

The protein belongs to the class-II pyridoxal-phosphate-dependent aminotransferase family. Histidinol-phosphate aminotransferase subfamily. Homodimer. It depends on pyridoxal 5'-phosphate as a cofactor.

The catalysed reaction is L-histidinol phosphate + 2-oxoglutarate = 3-(imidazol-4-yl)-2-oxopropyl phosphate + L-glutamate. Its pathway is amino-acid biosynthesis; L-histidine biosynthesis; L-histidine from 5-phospho-alpha-D-ribose 1-diphosphate: step 7/9. This chain is Histidinol-phosphate aminotransferase, found in Aliivibrio fischeri (strain ATCC 700601 / ES114) (Vibrio fischeri).